We begin with the raw amino-acid sequence, 207 residues long: Dephospho-CoA kinase (207 aa).

Positions 5–202 (VVGLTGGIGS…LQYLKLSAEK (198 aa)) constitute a DPCK domain. Position 13–18 (13–18 (GSGKST)) interacts with ATP.

It belongs to the CoaE family.

It localises to the cytoplasm. The enzyme catalyses 3'-dephospho-CoA + ATP = ADP + CoA + H(+). The protein operates within cofactor biosynthesis; coenzyme A biosynthesis; CoA from (R)-pantothenate: step 5/5. Its function is as follows. Catalyzes the phosphorylation of the 3'-hydroxyl group of dephosphocoenzyme A to form coenzyme A. This is Dephospho-CoA kinase from Dechloromonas aromatica (strain RCB).